The following is a 305-amino-acid chain: tRNA uridine(34) hydroxylase (305 aa).

The Rhodanese domain occupies 136 to 230 (ADENTVVVDK…YLEEVPREQS (95 aa)). Cys190 serves as the catalytic Cysteine persulfide intermediate.

Belongs to the TrhO family.

It carries out the reaction uridine(34) in tRNA + AH2 + O2 = 5-hydroxyuridine(34) in tRNA + A + H2O. Its function is as follows. Catalyzes oxygen-dependent 5-hydroxyuridine (ho5U) modification at position 34 in tRNAs. This is tRNA uridine(34) hydroxylase from Brucella melitensis biotype 1 (strain ATCC 23456 / CCUG 17765 / NCTC 10094 / 16M).